A 453-amino-acid polypeptide reads, in one-letter code: Probable glycine dehydrogenase (decarboxylating) subunit 1 (453 aa).

This sequence belongs to the GcvP family. N-terminal subunit subfamily. In terms of assembly, the glycine cleavage system is composed of four proteins: P, T, L and H. In this organism, the P 'protein' is a heterodimer of two subunits.

It carries out the reaction N(6)-[(R)-lipoyl]-L-lysyl-[glycine-cleavage complex H protein] + glycine + H(+) = N(6)-[(R)-S(8)-aminomethyldihydrolipoyl]-L-lysyl-[glycine-cleavage complex H protein] + CO2. In terms of biological role, the glycine cleavage system catalyzes the degradation of glycine. The P protein binds the alpha-amino group of glycine through its pyridoxal phosphate cofactor; CO(2) is released and the remaining methylamine moiety is then transferred to the lipoamide cofactor of the H protein. This Dictyoglomus thermophilum (strain ATCC 35947 / DSM 3960 / H-6-12) protein is Probable glycine dehydrogenase (decarboxylating) subunit 1.